A 618-amino-acid polypeptide reads, in one-letter code: MATVINPPRDPNTLSNYNNWVSIHITANFDILFDQKKLAGNVVHRFRSTTRGESRDIILDTNHLDIGGVKVNGQPSSWEFLPRLEPYGTPLKIKLDQAVELDETIEVDISVTTTEKCTALQWLTPAQTSNKKHPYMFSQCQAIHARSIFPCQDTPDVKCTLDFNITSPLPVIASGLPVRKQPETSKSEGKSLYQFHQKVPIPSYLFALASGDISEASIGPRSVVATSPDKLRECQWELEADTEKFINAIEKIVYPYVWGEYNVLILPPSFPYGGMENPIFTFATPSIISKDRENIDVIAHELAHSWSGNLVTNASWEHFWLNEGWTTYLERRVSDASVHGEPYRHFSAIIGWKALTDSMDHFGHDHDFTKLITNLKGKDPDDAFSSIPYEKGFNFLYYLETLVGKSKFDDFIPHYFNKFKGKSLDSYEFKATILDFFQADSEAAKALNEVDWDKWFYAPGLPPKPDFDTSLVDVVYDLAKKWLSLPGSSFKPQPNDIRGLSANQIVVFLEQVLVSEHQLTPELSRLMGEVYGLARSNNIEVANLYCQVGMKAGDESVLEPTIELLGKIGRMKFVRPLYRNLQKFNRQRAIETFQEYKDFYHPICRAMVEKDLFGKKEE.

A peptide-binding positions include 139–141 (QCQ) and 271–276 (PYGGME). Residue H300 coordinates Zn(2+). The Proton acceptor role is filled by E301. Positions 304 and 323 each coordinate Zn(2+). The Proton donor role is filled by Y389.

It belongs to the peptidase M1 family. Zn(2+) serves as cofactor.

The protein localises to the cytoplasm. The protein resides in the nucleus. It catalyses the reaction an epoxide + H2O = an ethanediol. Its function is as follows. Aminopeptidase that preferentially cleaves di- and tripeptides. Also has low epoxide hydrolase activity (in vitro). Can hydrolyze the epoxide leukotriene LTA(4) but it forms preferentially 5,6-dihydroxy-7,9,11,14-eicosatetraenoic acid rather than the cytokine leukotriene B(4) as the product compared to the homologous mammalian enzyme (in vitro). In Aspergillus clavatus (strain ATCC 1007 / CBS 513.65 / DSM 816 / NCTC 3887 / NRRL 1 / QM 1276 / 107), this protein is Leucine aminopeptidase 2.